Reading from the N-terminus, the 137-residue chain is Protein PsiE homolog (137 aa).

The next 4 helical transmembrane spans lie at 15–35 (LRIT…AFLI), 55–75 (YYMT…ALIV), 82–102 (FHFP…RFII), and 108–128 (ATST…LFLA).

Belongs to the PsiE family.

Its subcellular location is the cell membrane. The sequence is that of Protein PsiE homolog from Listeria innocua serovar 6a (strain ATCC BAA-680 / CLIP 11262).